The sequence spans 1239 residues: Zinc finger and BTB domain-containing protein 40 (1239 aa).

In terms of domain architecture, BTB spans 24-87 (CDCTISIGTI…MYTGKLPVGK (64 aa)). Disordered regions lie at residues 130-231 (SAPS…TSTE), 687-732 (HLEA…PDPA), and 779-801 (KELD…PKKK). Positions 136 to 145 (TFRKEPEKPQ) are enriched in basic and acidic residues. Over residues 181–199 (SVSQEMSVNSPTAQESQRN) the composition is skewed to polar residues. Serine 190 is subject to Phosphoserine. Residues 200–212 (AETPAETPTTAEA) are compositionally biased toward low complexity. The span at 687–703 (HLEANNKEDEKAAKEDS) shows a compositional bias: basic and acidic residues. Serine 703 bears the Phosphoserine mark. A compositionally biased stretch (polar residues) spans 705–719 (PGEQNDQGETGSLPG). 10 consecutive C2H2-type zinc fingers follow at residues 807-830 (VTCD…LTEH), 836-858 (FSCE…LRLH), 864-887 (FMCK…KKKH), 893-915 (YACQ…VRTH), 921-944 (YVCR…HTFH), 950-973 (YDCK…HEVH), 978-1000 (HPCP…VVTH), 1006-1029 (FSCG…RTHH), 1046-1069 (LQCS…KAEH), and 1075-1098 (HECD…KCQH). Lysine 1066 participates in a covalent cross-link: Glycyl lysine isopeptide (Lys-Gly) (interchain with G-Cter in SUMO2). Residues 1104–1127 (FRCLYCAATFRFPGALQHHVTTEH) form a C2H2-type 11; atypical zinc finger. The C2H2-type 12 zinc finger occupies 1135–1158 (FPCELCGELFTSQAQLDSHLESEH).

Belongs to the krueppel C2H2-type zinc-finger protein family.

The protein resides in the nucleus. May be involved in transcriptional regulation. This Homo sapiens (Human) protein is Zinc finger and BTB domain-containing protein 40 (ZBTB40).